Consider the following 252-residue polypeptide: 5-oxoprolinase subunit A (252 aa).

It belongs to the LamB/PxpA family. Forms a complex composed of PxpA, PxpB and PxpC.

It catalyses the reaction 5-oxo-L-proline + ATP + 2 H2O = L-glutamate + ADP + phosphate + H(+). Catalyzes the cleavage of 5-oxoproline to form L-glutamate coupled to the hydrolysis of ATP to ADP and inorganic phosphate. This chain is 5-oxoprolinase subunit A, found in Staphylococcus saprophyticus subsp. saprophyticus (strain ATCC 15305 / DSM 20229 / NCIMB 8711 / NCTC 7292 / S-41).